The chain runs to 169 residues: uncharacterized protein (169 aa).

Disordered stretches follow at residues 32 to 53 (VSGP…APAP) and 148 to 169 (VSGS…AGGA).

This is an uncharacterized protein from Homo sapiens (Human).